Reading from the N-terminus, the 218-residue chain is Ribose-5-phosphate isomerase A (218 aa).

Substrate contacts are provided by residues 27 to 30 (TGST), 80 to 83 (DGAD), and 93 to 96 (KGGG). The Proton acceptor role is filled by E102. Residue K120 participates in substrate binding.

This sequence belongs to the ribose 5-phosphate isomerase family. Homodimer.

It carries out the reaction aldehydo-D-ribose 5-phosphate = D-ribulose 5-phosphate. The protein operates within carbohydrate degradation; pentose phosphate pathway; D-ribose 5-phosphate from D-ribulose 5-phosphate (non-oxidative stage): step 1/1. Catalyzes the reversible conversion of ribose-5-phosphate to ribulose 5-phosphate. The protein is Ribose-5-phosphate isomerase A of Thiobacillus denitrificans (strain ATCC 25259 / T1).